The following is a 693-amino-acid chain: Protein-glutamine gamma-glutamyltransferase E (693 aa).

At tyrosine 111 the chain carries Phosphotyrosine. Threonine 112 bears the Phosphothreonine mark. Positions 222, 225, 227, 228, and 230 each coordinate Ca(2+). Cysteine 273 is a catalytic residue. 5 residues coordinate Ca(2+): aspartate 302, aspartate 304, asparagine 306, serine 308, and aspartate 325. Residues histidine 331 and aspartate 354 contribute to the active site. The Ca(2+) site is built by asparagine 394, threonine 416, glutamate 444, and glutamate 449. Residues 457 to 483 (LDKLKPNASFGATSSRNPEGEDKEPSI) form a disordered region.

Belongs to the transglutaminase superfamily. Transglutaminase family. In terms of assembly, consists of two polypeptide chains, which are synthesized as a precursor form of a single polypeptide. The cofactor is Ca(2+). In terms of processing, activated by proteolytic processing. In vitro activation is commonly achieved by cleavage with dispase, a neutral bacterial protease. Physiological activation may be catalyzed by CTSL and, to a lesser extent, by CTSS. In terms of tissue distribution, expressed in skin and stomach and, at lower levels, in testis, kidney and spleen (at protein level). On the basis of its catalytic activity, detected in the epidermis, around the granular and spinous layers but not in the outermost cornified layers. In hair follicles, mainly located in the medulla and the hair cortex.

It localises to the cytoplasm. The catalysed reaction is L-glutaminyl-[protein] + L-lysyl-[protein] = [protein]-L-lysyl-N(6)-5-L-glutamyl-[protein] + NH4(+). Its function is as follows. Catalyzes the calcium-dependent formation of isopeptide cross-links between glutamine and lysine residues in various proteins, as well as the conjugation of polyamines to proteins. Involved in the formation of the cornified envelope (CE), a specialized component consisting of covalent cross-links of proteins beneath the plasma membrane of terminally differentiated keratinocytes. Catalyzes small proline-rich proteins (SPRR1 and SPRR2) and LOR cross-linking to form small interchain oligomers, which are further cross-linked by TGM1 onto the growing CE scaffold. In hair follicles, involved in cross-linking structural proteins to hardening the inner root sheath. In Mus musculus (Mouse), this protein is Protein-glutamine gamma-glutamyltransferase E (Tgm3).